The primary structure comprises 465 residues: UDP-N-acetylmuramate--L-alanine ligase (465 aa).

An ATP-binding site is contributed by 112-118 (GTHGKTT).

It belongs to the MurCDEF family.

Its subcellular location is the cytoplasm. The enzyme catalyses UDP-N-acetyl-alpha-D-muramate + L-alanine + ATP = UDP-N-acetyl-alpha-D-muramoyl-L-alanine + ADP + phosphate + H(+). The protein operates within cell wall biogenesis; peptidoglycan biosynthesis. Functionally, cell wall formation. The polypeptide is UDP-N-acetylmuramate--L-alanine ligase (Janthinobacterium sp. (strain Marseille) (Minibacterium massiliensis)).